Reading from the N-terminus, the 181-residue chain is Cytidylate kinase (181 aa).

ATP is bound at residue 7–15 (GPPGSGTTS).

Belongs to the cytidylate kinase family. Type 2 subfamily.

It is found in the cytoplasm. It catalyses the reaction CMP + ATP = CDP + ADP. The catalysed reaction is dCMP + ATP = dCDP + ADP. This is Cytidylate kinase from Methanoculleus marisnigri (strain ATCC 35101 / DSM 1498 / JR1).